Reading from the N-terminus, the 154-residue chain is Ribonuclease H (154 aa).

Positions 1–142 constitute an RNase H type-1 domain; sequence MQKQIEIFTD…CDELAKKGAE (142 aa). Mg(2+) contacts are provided by Asp10, Glu48, Asp70, and Asp134.

The protein belongs to the RNase H family. As to quaternary structure, monomer. It depends on Mg(2+) as a cofactor.

The protein resides in the cytoplasm. It carries out the reaction Endonucleolytic cleavage to 5'-phosphomonoester.. In terms of biological role, endonuclease that specifically degrades the RNA of RNA-DNA hybrids. This Haemophilus influenzae (strain 86-028NP) protein is Ribonuclease H.